A 477-amino-acid polypeptide reads, in one-letter code: Proline--tRNA ligase (477 aa).

The protein belongs to the class-II aminoacyl-tRNA synthetase family. ProS type 3 subfamily. Homodimer.

Its subcellular location is the cytoplasm. It carries out the reaction tRNA(Pro) + L-proline + ATP = L-prolyl-tRNA(Pro) + AMP + diphosphate. Catalyzes the attachment of proline to tRNA(Pro) in a two-step reaction: proline is first activated by ATP to form Pro-AMP and then transferred to the acceptor end of tRNA(Pro). This Lachnoclostridium phytofermentans (strain ATCC 700394 / DSM 18823 / ISDg) (Clostridium phytofermentans) protein is Proline--tRNA ligase.